A 931-amino-acid polypeptide reads, in one-letter code: Aftiphilin (931 aa).

The disordered stretch occupies residues 1–49; it reads MEPDIIRMYSSSPPPLDNGAEDDEEDEFGEFGGFSEVSPSGVGFVDFDT. The span at 19 to 29 shows a compositional bias: acidic residues; sequence GAEDDEEDEFG. The WXXF motif 1 motif lies at 28-31; the sequence is FGEF. The span at 33-45 shows a compositional bias: low complexity; that stretch reads GFSEVSPSGVGFV. Ser-151 carries the phosphoserine modification. The span at 371-381 shows a compositional bias: polar residues; the sequence is SVKTSDVNEIG. The tract at residues 371–454 is disordered; the sequence is SVKTSDVNEI…PFVTSTQDSM (84 aa). Residue Ser-395 is modified to Phosphoserine. The short motif at 433 to 436 is the WXXF motif 2 element; that stretch reads FGDF. A compositionally biased stretch (polar residues) spans 439–454; that stretch reads ANGTTPPFVTSTQDSM. A WXXF motif 3 motif is present at residues 476 to 479; that stretch reads FGEF. Disordered stretches follow at residues 494–561 and 599–636; these read TESD…SSAG and WQSQRTDETMGTLGTPKMHSVSSAASKGAVASGHLQEP. Positions 516 to 530 are enriched in basic and acidic residues; sequence GGKDSKPDSKLKNGQ. Thr-613 is subject to Phosphothreonine. Residues 618-631 show a composition bias toward low complexity; the sequence is SVSSAASKGAVASG. Residues 712-714 carry the CLTCL1/Clathrin-binding motif; the sequence is YQW. The tract at residues 821-825 is clathrin-binding; it reads LLNLD.

In terms of assembly, self-associates. Interacts with GGA1 (via GAE domain). Interacts with GGA3 (via GAE domain), AP1G1 (via GAE domain) and AP1G2 (via GAE domain). Component of the aftiphilin/p200/gamma-synergin complex, at least composed of AFTPH/aftiphilin, HEATR5B/p200a and SYNRG/gamma-synergin, which plays a role in the AP1G1/AP-1-mediated protein trafficking from early to recycling endosomes. Within the complex interacts with HEATR5B/p200a and SYNRG/gamma-synergin; the interactions are direct. Interacts with AP1G1/AP-1; the interaction is required to recruit AFTPH/aftiphilin to the perinuclear region of the cell. Interacts with CLTCL1/Clathrin.

It localises to the cytoplasm. The protein localises to the perinuclear region. It is found in the cytoplasmic vesicle. Its subcellular location is the clathrin-coated vesicle. Functionally, component of clathrin-coated vesicles. Component of the aftiphilin/p200/gamma-synergin complex, which plays roles in AP1G1/AP-1-mediated protein trafficking including the trafficking of transferrin from early to recycling endosomes, and the membrane trafficking of furin and the lysosomal enzyme cathepsin D between the trans-Golgi network (TGN) and endosomes. This Mus musculus (Mouse) protein is Aftiphilin (Aftph).